A 311-amino-acid polypeptide reads, in one-letter code: Methionyl-tRNA formyltransferase (311 aa).

110 to 113 contributes to the (6S)-5,6,7,8-tetrahydrofolate binding site; the sequence is SLLP.

This sequence belongs to the Fmt family.

The enzyme catalyses L-methionyl-tRNA(fMet) + (6R)-10-formyltetrahydrofolate = N-formyl-L-methionyl-tRNA(fMet) + (6S)-5,6,7,8-tetrahydrofolate + H(+). Attaches a formyl group to the free amino group of methionyl-tRNA(fMet). The formyl group appears to play a dual role in the initiator identity of N-formylmethionyl-tRNA by promoting its recognition by IF2 and preventing the misappropriation of this tRNA by the elongation apparatus. The chain is Methionyl-tRNA formyltransferase from Streptococcus pyogenes serotype M18 (strain MGAS8232).